The chain runs to 210 residues: Large ribosomal subunit protein uL15 (210 aa).

Disordered stretches follow at residues 1 to 64 and 76 to 104; these read MADD…AAPR and AAGAKKEKTRVGRGEGSKGKTAGRGTKGT. Residues 9 to 54 show a composition bias toward low complexity; it reads EAAAKPVAEKATATALAKKAPAKAAAADKAAPAAKGETVAAKPAKA. Basic and acidic residues predominate over residues 79-93; sequence AKKEKTRVGRGEGSK.

This sequence belongs to the universal ribosomal protein uL15 family. As to quaternary structure, part of the 50S ribosomal subunit.

Binds to the 23S rRNA. In Leifsonia xyli subsp. xyli (strain CTCB07), this protein is Large ribosomal subunit protein uL15.